A 327-amino-acid polypeptide reads, in one-letter code: MAAAAAAAAATNGTGGSSGMEVDAAVVPSVMACGVTGSVSVALHPLVILNISDHWIRMRSQEGRPVQVIGALIGKQEGRNIEVMNSFELLSHTVEEKIIIDKEYYYTKEEQFKQVFKELEFLGWYTTGGPPDPSDIHVHKQVCEIIESPLFLKLNPMTKHTDLPVSVFESVIDIINGEATMLFAELTYTLATEEAERIGVDHVARMTATGSGENSTVAEHLIAQHSAIKMLHSRVKLILEYVKASEAGEVPFNHEILREAYALCHCLPVLSTDKFKTDFYDQCNDVGLMAYLGTITKTCNTMNQFVNKFNVLYDRQGIGRRMRGLFF.

Residues valine 41–isoleucine 174 form the MPN domain. Residues serine 211 to phenylalanine 327 are interaction with Vpr.

Belongs to the peptidase M67A family. CSN6 subfamily. As to quaternary structure, component of the CSN complex, composed of COPS1/GPS1, COPS2, COPS3, COPS4, COPS5, COPS6, COPS7 (COPS7A or COPS7B), COPS8 and COPS9 isoform 1. In the complex, it probably interacts directly with COPS2, COPS4, COPS5, COPS7 (COPS7A or COPS7B) and COPS9 isoform 1. Interacts with the translation initiation factor EIF3S6. Interacts weakly with RBX1. Directly interacts with COP1 and 14-3-3 protein sigma/SFN. Interacts with ERCC6. (Microbial infection) Interacts with the HIV-1 protein Vpr. As to expression, widely expressed.

The protein resides in the nucleus. It localises to the cytoplasm. The protein localises to the perinuclear region. Functionally, component of the COP9 signalosome complex (CSN), a complex involved in various cellular and developmental processes. The CSN complex is an essential regulator of the ubiquitin (Ubl) conjugation pathway by mediating the deneddylation of the cullin subunits of SCF-type E3 ligase complexes, leading to decrease the Ubl ligase activity of SCF-type complexes such as SCF, CSA or DDB2. The complex is also involved in phosphorylation of p53/TP53, c-jun/JUN, IkappaBalpha/NFKBIA, ITPK1 and IRF8, possibly via its association with CK2 and PKD kinases. CSN-dependent phosphorylation of TP53 and JUN promotes and protects degradation by the Ubl system, respectively. Has some glucocorticoid receptor-responsive activity. Stabilizes COP1 through reducing COP1 auto-ubiquitination and decelerating COP1 turnover rate, hence regulates the ubiquitination of COP1 targets. The polypeptide is COP9 signalosome complex subunit 6 (COPS6) (Homo sapiens (Human)).